Reading from the N-terminus, the 292-residue chain is 1,4-dihydroxy-2-naphthoate octaprenyltransferase (292 aa).

Transmembrane regions (helical) follow at residues 35 to 55, 101 to 121, 137 to 157, 166 to 186, 220 to 240, and 271 to 291; these read AAVW…VIGV, ALAG…VGAI, GYAG…AVLG, VDWV…SVLV, LLAV…WCVV, and TGLA…FGQL.

It belongs to the MenA family. Type 1 subfamily. Requires Mg(2+) as cofactor.

Its subcellular location is the cell membrane. It catalyses the reaction an all-trans-polyprenyl diphosphate + 1,4-dihydroxy-2-naphthoate + H(+) = a 2-demethylmenaquinol + CO2 + diphosphate. It participates in quinol/quinone metabolism; menaquinone biosynthesis; menaquinol from 1,4-dihydroxy-2-naphthoate: step 1/2. With respect to regulation, activity is abolished by EDTA. Inhibited by Ro 48-8071, which is non-competitive with regard to DHNA and competitive with regard to the isoprenyldiphosphate substrate. In terms of biological role, conversion of 1,4-dihydroxy-2-naphthoate (DHNA) to demethylmenaquinone (DMK). Can use a variety of allylic isoprenyl diphosphates as substrates but has a requirement for at least three isoprene units. In Mycobacterium tuberculosis (strain ATCC 25618 / H37Rv), this protein is 1,4-dihydroxy-2-naphthoate octaprenyltransferase.